The following is a 382-amino-acid chain: 1-deoxy-D-xylulose 5-phosphate reductoisomerase (382 aa).

Positions 10, 11, 12, 13, 36, and 122 each coordinate NADPH. K123 provides a ligand contact to 1-deoxy-D-xylulose 5-phosphate. NADPH is bound at residue E124. D148 is a binding site for Mn(2+). Positions 149, 150, 174, and 197 each coordinate 1-deoxy-D-xylulose 5-phosphate. E150 is a Mn(2+) binding site. NADPH is bound at residue G203. 1-deoxy-D-xylulose 5-phosphate-binding residues include S210, N215, K216, and E219. Position 219 (E219) interacts with Mn(2+).

It belongs to the DXR family. Mg(2+) is required as a cofactor. The cofactor is Mn(2+).

It catalyses the reaction 2-C-methyl-D-erythritol 4-phosphate + NADP(+) = 1-deoxy-D-xylulose 5-phosphate + NADPH + H(+). Its pathway is isoprenoid biosynthesis; isopentenyl diphosphate biosynthesis via DXP pathway; isopentenyl diphosphate from 1-deoxy-D-xylulose 5-phosphate: step 1/6. In terms of biological role, catalyzes the NADPH-dependent rearrangement and reduction of 1-deoxy-D-xylulose-5-phosphate (DXP) to 2-C-methyl-D-erythritol 4-phosphate (MEP). This Prosthecochloris aestuarii (strain DSM 271 / SK 413) protein is 1-deoxy-D-xylulose 5-phosphate reductoisomerase.